The chain runs to 198 residues: Probable GTP-binding protein EngB (198 aa).

One can recognise an EngB-type G domain in the interval 22–195 (NRVEVAFVGR…IDNLFLEFAT (174 aa)). Residues 30–37 (GRSNVGKS), 57–61 (GKTRL), 75–78 (DLPG), 142–145 (TKSD), and 174–176 (FSS) each bind GTP. Positions 37 and 59 each coordinate Mg(2+).

This sequence belongs to the TRAFAC class TrmE-Era-EngA-EngB-Septin-like GTPase superfamily. EngB GTPase family. Requires Mg(2+) as cofactor.

Its function is as follows. Necessary for normal cell division and for the maintenance of normal septation. The chain is Probable GTP-binding protein EngB from Clostridium beijerinckii (strain ATCC 51743 / NCIMB 8052) (Clostridium acetobutylicum).